Reading from the N-terminus, the 662-residue chain is UvrABC system protein B (662 aa).

Positions 31–188 (DNIEGGEKAQ…NDLVDIQFER (158 aa)) constitute a Helicase ATP-binding domain. 44-51 (GATGTGKT) lines the ATP pocket. Residues 97–120 (YYDYYQPEAYVPSSDTYIEKDSSV) carry the Beta-hairpin motif. A Helicase C-terminal domain is found at 435–601 (QIDDLLGEIN…TIKKEIRDLI (167 aa)). The 36-residue stretch at 626–661 (KELVKKLEKQMQEAVEVLDFELAAQIRDMMLEVKAL) folds into the UVR domain.

Belongs to the UvrB family. Forms a heterotetramer with UvrA during the search for lesions. Interacts with UvrC in an incision complex.

It is found in the cytoplasm. Functionally, the UvrABC repair system catalyzes the recognition and processing of DNA lesions. A damage recognition complex composed of 2 UvrA and 2 UvrB subunits scans DNA for abnormalities. Upon binding of the UvrA(2)B(2) complex to a putative damaged site, the DNA wraps around one UvrB monomer. DNA wrap is dependent on ATP binding by UvrB and probably causes local melting of the DNA helix, facilitating insertion of UvrB beta-hairpin between the DNA strands. Then UvrB probes one DNA strand for the presence of a lesion. If a lesion is found the UvrA subunits dissociate and the UvrB-DNA preincision complex is formed. This complex is subsequently bound by UvrC and the second UvrB is released. If no lesion is found, the DNA wraps around the other UvrB subunit that will check the other stand for damage. This is UvrABC system protein B from Streptococcus pneumoniae (strain P1031).